A 382-amino-acid polypeptide reads, in one-letter code: D-galactonate dehydratase (382 aa).

Position 183 (Asp183) interacts with Mg(2+). His185 functions as the Proton donor in the catalytic mechanism. Mg(2+) contacts are provided by Glu209 and Glu235. His285 functions as the Proton acceptor in the catalytic mechanism.

The protein belongs to the mandelate racemase/muconate lactonizing enzyme family. GalD subfamily. Mg(2+) is required as a cofactor.

The catalysed reaction is D-galactonate = 2-dehydro-3-deoxy-D-galactonate + H2O. The protein operates within carbohydrate acid metabolism; D-galactonate degradation; D-glyceraldehyde 3-phosphate and pyruvate from D-galactonate: step 1/3. Its function is as follows. Catalyzes the dehydration of D-galactonate to 2-keto-3-deoxy-D-galactonate. The chain is D-galactonate dehydratase from Salmonella choleraesuis (strain SC-B67).